A 338-amino-acid chain; its full sequence is UPF0284 protein PAE0372 (338 aa).

The protein belongs to the UPF0284 family.

The sequence is that of UPF0284 protein PAE0372 from Pyrobaculum aerophilum (strain ATCC 51768 / DSM 7523 / JCM 9630 / CIP 104966 / NBRC 100827 / IM2).